A 154-amino-acid polypeptide reads, in one-letter code: Regulatory protein RecX (154 aa).

Belongs to the RecX family.

The protein resides in the cytoplasm. Modulates RecA activity. The polypeptide is Regulatory protein RecX (Trichlorobacter lovleyi (strain ATCC BAA-1151 / DSM 17278 / SZ) (Geobacter lovleyi)).